The chain runs to 187 residues: Ras-like protein rasD (187 aa).

10–17 (GGGGVGKS) is a binding site for GTP. The Effector region motif lies at 32 to 40 (YDPTIEDSY). GTP contacts are provided by residues 57–61 (DTAGQ) and 116–119 (NKAD). Cysteine methyl ester is present on Cys-184. The S-geranylgeranyl cysteine moiety is linked to residue Cys-184. The propeptide at 185 to 187 (LIL) is removed in mature form.

This sequence belongs to the small GTPase superfamily. Ras family.

Its subcellular location is the cell membrane. It carries out the reaction GTP + H2O = GDP + phosphate + H(+). With respect to regulation, alternates between an inactive form bound to GDP and an active form bound to GTP. Activated by a guanine nucleotide-exchange factor (GEF) and inactivated by a GTPase-activating protein (GAP). Functionally, ras proteins bind GDP/GTP and possess intrinsic GTPase activity. The polypeptide is Ras-like protein rasD (rasD) (Dictyostelium discoideum (Social amoeba)).